Consider the following 875-residue polypeptide: Alanine--tRNA ligase (875 aa).

Zn(2+) contacts are provided by His-564, His-568, Cys-666, and His-670.

It belongs to the class-II aminoacyl-tRNA synthetase family. In terms of assembly, homotetramer. It depends on Zn(2+) as a cofactor.

It is found in the cytoplasm. The catalysed reaction is tRNA(Ala) + L-alanine + ATP = L-alanyl-tRNA(Ala) + AMP + diphosphate. Catalyzes the attachment of alanine to tRNA(Ala) in a two-step reaction: alanine is first activated by ATP to form Ala-AMP and then transferred to the acceptor end of tRNA(Ala). Also edits incorrectly charged Ser-tRNA(Ala) and Gly-tRNA(Ala) via its editing domain. This chain is Alanine--tRNA ligase, found in Sodalis glossinidius (strain morsitans).